Consider the following 401-residue polypeptide: Chalcone synthase 2 (401 aa).

C168 is a catalytic residue.

The protein belongs to the thiolase-like superfamily. Chalcone/stilbene synthases family.

The enzyme catalyses (E)-4-coumaroyl-CoA + 3 malonyl-CoA + 3 H(+) = 2',4,4',6'-tetrahydroxychalcone + 3 CO2 + 4 CoA. Its pathway is secondary metabolite biosynthesis; flavonoid biosynthesis. The primary product of this enzyme is 4,2',4',6'-tetrahydroxychalcone (also termed naringenin-chalcone or chalcone) which can under specific conditions spontaneously isomerize into naringenin. In Sorghum bicolor (Sorghum), this protein is Chalcone synthase 2 (CHS2).